Reading from the N-terminus, the 547-residue chain is Threonylcarbamoyladenosine tRNA methylthiotransferase (547 aa).

The tract at residues 30–51 (ARKSVVPRARKHKQETGEQMQT) is disordered. The MTTase N-terminal domain maps to 59–167 (QKVWLKTWGC…VVEVVDEAIK (109 aa)). [4Fe-4S] cluster contacts are provided by Cys-68, Cys-104, Cys-133, Cys-209, Cys-213, and Cys-216. Residues 195-426 (RKNPLIEIIS…ALFHSYRPYD (232 aa)) enclose the Radical SAM core domain. The TRAM domain occupies 426 to 488 (DHKMGEQQQV…KHYMKGRPLE (63 aa)). Residues 527 to 547 (ILAVVLLLSAVLLALLMEKLL) traverse the membrane as a helical segment.

The protein belongs to the methylthiotransferase family. CDKAL1 subfamily. It depends on [4Fe-4S] cluster as a cofactor.

It localises to the endoplasmic reticulum membrane. The enzyme catalyses N(6)-L-threonylcarbamoyladenosine(37) in tRNA + (sulfur carrier)-SH + AH2 + 2 S-adenosyl-L-methionine = 2-methylsulfanyl-N(6)-L-threonylcarbamoyladenosine(37) in tRNA + (sulfur carrier)-H + 5'-deoxyadenosine + L-methionine + A + S-adenosyl-L-homocysteine + 2 H(+). Functionally, catalyzes the methylthiolation of N6-threonylcarbamoyladenosine (t(6)A), leading to the formation of 2-methylthio-N6-threonylcarbamoyladenosine (ms(2)t(6)A) at position 37 in tRNAs that read codons beginning with adenine. This is Threonylcarbamoyladenosine tRNA methylthiotransferase (cdkal1) from Danio rerio (Zebrafish).